The sequence spans 660 residues: Pentatricopeptide repeat-containing protein At4g20090 (660 aa).

PPR repeat units follow at residues Gly76 to Ile110, Ile111 to Glu141, Ser147 to Met181, Asn186 to Pro220, Asp221 to Pro255, Ser256 to Pro290, Asn291 to Pro325, Asn326 to Leu360, Asn361 to Pro395, Asn396 to Pro430, Asn431 to Arg465, Asn466 to Pro500, Asp501 to Lys535, Asp539 to Pro573, and Asp574 to Arg609.

Belongs to the PPR family. P subfamily.

May play a role in embryogenesis. The sequence is that of Pentatricopeptide repeat-containing protein At4g20090 (EMB1025) from Arabidopsis thaliana (Mouse-ear cress).